Reading from the N-terminus, the 211-residue chain is Protein-methionine-sulfoxide reductase heme-binding subunit MsrQ (211 aa).

4 consecutive transmembrane segments (helical) span residues tryptophan 10–isoleucine 30, leucine 82–valine 102, proline 116–threonine 136, and phenylalanine 153–serine 173.

This sequence belongs to the MsrQ family. As to quaternary structure, heterodimer of a catalytic subunit (MsrP) and a heme-binding subunit (MsrQ). FMN serves as cofactor. The cofactor is heme b.

The protein localises to the cell inner membrane. Functionally, part of the MsrPQ system that repairs oxidized periplasmic proteins containing methionine sulfoxide residues (Met-O), using respiratory chain electrons. Thus protects these proteins from oxidative-stress damage caused by reactive species of oxygen and chlorine generated by the host defense mechanisms. MsrPQ is essential for the maintenance of envelope integrity under bleach stress, rescuing a wide series of structurally unrelated periplasmic proteins from methionine oxidation, including the primary periplasmic chaperone SurA and the lipoprotein Pal. MsrQ provides electrons for reduction to the reductase catalytic subunit MsrP, using the quinone pool of the respiratory chain. The chain is Protein-methionine-sulfoxide reductase heme-binding subunit MsrQ from Escherichia coli O157:H7.